The chain runs to 497 residues: Serine hydroxymethyltransferase (497 aa).

(6S)-5,6,7,8-tetrahydrofolate-binding positions include Leu-176 and 180-182; that span reads GHL. Lys-289 is modified (N6-(pyridoxal phosphate)lysine).

Belongs to the SHMT family. Homodimer. The cofactor is pyridoxal 5'-phosphate.

It localises to the cytoplasm. The catalysed reaction is (6R)-5,10-methylene-5,6,7,8-tetrahydrofolate + glycine + H2O = (6S)-5,6,7,8-tetrahydrofolate + L-serine. It functions in the pathway one-carbon metabolism; tetrahydrofolate interconversion. It participates in amino-acid biosynthesis; glycine biosynthesis; glycine from L-serine: step 1/1. Its function is as follows. Catalyzes the reversible interconversion of serine and glycine with tetrahydrofolate (THF) serving as the one-carbon carrier. This reaction serves as the major source of one-carbon groups required for the biosynthesis of purines, thymidylate, methionine, and other important biomolecules. Also exhibits THF-independent aldolase activity toward beta-hydroxyamino acids, producing glycine and aldehydes, via a retro-aldol mechanism. This is Serine hydroxymethyltransferase from Chlamydia abortus (strain DSM 27085 / S26/3) (Chlamydophila abortus).